A 355-amino-acid polypeptide reads, in one-letter code: Poly(3-hydroxyalkanoate) polymerase subunit PhaC (355 aa).

Positions 68-333 constitute an AB hydrolase-1 domain; it reads PLLIVYALVN…LAFPGGHIGI (266 aa). Cysteine 148 is an active-site residue.

Belongs to the PHA/PHB synthase family. Type III PhaC subfamily. As to quaternary structure, forms a heterodimer with PhaE, which may multimerize in the presence of 3-hydroxybutyryl-CoA.

The protein resides in the cytoplasm. The catalysed reaction is (3R)-3-hydroxybutanoyl-CoA + [(3R)-hydroxybutanoate](n) = [(3R)-hydroxybutanoate](n+1) + CoA. Its pathway is biopolymer metabolism; poly-(R)-3-hydroxybutanoate biosynthesis. Polymerizes D(-)-3-hydroxybutyryl-CoA to create PHB which consists of thousands of hydroxybutyrate molecules linked end to end. PHB serves as an intracellular energy reserve material when cells grow under conditions of nutrient limitation. In Thiocystis violacea, this protein is Poly(3-hydroxyalkanoate) polymerase subunit PhaC.